A 331-amino-acid chain; its full sequence is Tetraacyldisaccharide 4'-kinase (331 aa).

Residue 51–58 (TAGGAGKT) coordinates ATP.

It belongs to the LpxK family.

It carries out the reaction a lipid A disaccharide + ATP = a lipid IVA + ADP + H(+). It participates in glycolipid biosynthesis; lipid IV(A) biosynthesis; lipid IV(A) from (3R)-3-hydroxytetradecanoyl-[acyl-carrier-protein] and UDP-N-acetyl-alpha-D-glucosamine: step 6/6. In terms of biological role, transfers the gamma-phosphate of ATP to the 4'-position of a tetraacyldisaccharide 1-phosphate intermediate (termed DS-1-P) to form tetraacyldisaccharide 1,4'-bis-phosphate (lipid IVA). This chain is Tetraacyldisaccharide 4'-kinase, found in Rhodospirillum rubrum (strain ATCC 11170 / ATH 1.1.1 / DSM 467 / LMG 4362 / NCIMB 8255 / S1).